A 277-amino-acid chain; its full sequence is Cis-2,3-dihydrobiphenyl-2,3-diol dehydrogenase (277 aa).

Residue 9-33 participates in NAD(+) binding; the sequence is LITGGASGLGRALVDRFVAERAKVA. Ser142 contributes to the substrate binding site. Tyr155 serves as the catalytic Proton acceptor.

It belongs to the short-chain dehydrogenases/reductases (SDR) family. As to quaternary structure, homotetramer.

The enzyme catalyses (2R,3S)-3-phenylcyclohexa-3,5-diene-1,2-diol + NAD(+) = biphenyl-2,3-diol + NADH + H(+). Its pathway is xenobiotic degradation; biphenyl degradation; 2-hydroxy-2,4-pentadienoate and benzoate from biphenyl: step 2/4. The sequence is that of Cis-2,3-dihydrobiphenyl-2,3-diol dehydrogenase (bphB) from Pseudomonas putida (Arthrobacter siderocapsulatus).